A 400-amino-acid polypeptide reads, in one-letter code: Enolase (400 aa).

Position 153 (Q153) interacts with (2R)-2-phosphoglycerate. The Proton donor role is filled by E195. Positions 231, 274, and 301 each coordinate Mg(2+). (2R)-2-phosphoglycerate-binding residues include K326, R355, S356, and K377. K326 serves as the catalytic Proton acceptor.

It belongs to the enolase family. Requires Mg(2+) as cofactor.

It localises to the cytoplasm. Its subcellular location is the secreted. The protein localises to the cell surface. The catalysed reaction is (2R)-2-phosphoglycerate = phosphoenolpyruvate + H2O. The protein operates within carbohydrate degradation; glycolysis; pyruvate from D-glyceraldehyde 3-phosphate: step 4/5. Functionally, catalyzes the reversible conversion of 2-phosphoglycerate (2-PG) into phosphoenolpyruvate (PEP). It is essential for the degradation of carbohydrates via glycolysis. This is Enolase from Halorubrum lacusprofundi (strain ATCC 49239 / DSM 5036 / JCM 8891 / ACAM 34).